A 369-amino-acid polypeptide reads, in one-letter code: Phosphoribosyl pyrophosphate synthase-associated protein 2 (369 aa).

N-acetylmethionine is present on Met-1. 3 positions are modified to phosphoserine: Ser-219, Ser-227, and Ser-233.

This sequence belongs to the ribose-phosphate pyrophosphokinase family. In terms of assembly, binds to PRPS1 and PRPS2.

Seems to play a negative regulatory role in 5-phosphoribose 1-diphosphate synthesis. In Bos taurus (Bovine), this protein is Phosphoribosyl pyrophosphate synthase-associated protein 2 (PRPSAP2).